A 254-amino-acid polypeptide reads, in one-letter code: 14-3-3-like protein GF14 epsilon (254 aa).

Residues serine 65 and serine 188 each carry the phosphoserine modification.

It belongs to the 14-3-3 family. As to quaternary structure, interacts with DREB1A and DREB1B in the nucleus. Interacts with CINV1.

The protein resides in the nucleus. It localises to the cytoplasm. In terms of biological role, is associated with a DNA binding complex that binds to the G box, a well-characterized cis-acting DNA regulatory element found in plant genes. In Arabidopsis thaliana (Mouse-ear cress), this protein is 14-3-3-like protein GF14 epsilon (GRF10).